We begin with the raw amino-acid sequence, 2183 residues long: DNA polymerase epsilon catalytic subunit A (2183 aa).

Positions 2066, 2069, 2090, and 2093 each coordinate Zn(2+). Residues 2066–2093 (CFKCKNPCDLDLCKDSCCTKSGFRCPLC) form a CysA-type zinc finger. [4Fe-4S] cluster-binding residues include Cys-2124, Cys-2127, Cys-2139, and Cys-2141. Positions 2124 to 2141 (CDKCRRVKEYELTEFCPC) match the CysB motif motif.

This sequence belongs to the DNA polymerase type-B family. Heterotetramer. Consists of 4 subunits: POL2, DPB2, DPB3 and DPB4. It depends on [4Fe-4S] cluster as a cofactor.

The protein resides in the nucleus. The catalysed reaction is DNA(n) + a 2'-deoxyribonucleoside 5'-triphosphate = DNA(n+1) + diphosphate. Its function is as follows. DNA polymerase II participates in chromosomal DNA replication. The polypeptide is DNA polymerase epsilon catalytic subunit A (POL2) (Yarrowia lipolytica (strain CLIB 122 / E 150) (Yeast)).